The chain runs to 362 residues: Heme A synthase (362 aa).

5 helical membrane-spanning segments follow: residues 15–35 (VRIWLTLVAMLIAVMVLVGGA), 104–124 (VIGIAYLLPLLWFLWRGAIAP), 129–149 (ALWAIFALGALQGAVGWWMVA), 161–181 (VRLAIHLTLALVIYAAIVWTL), and 200–220 (AIALLALTLVQLFLGALVAGL). Residue His-264 coordinates heme. Transmembrane regions (helical) follow at residues 266–285 (MMAYALWALAAWHAIDALRA), 293–313 (GALWLFAALSLQAVLGILTLL), and 316–336 (VPIGLALAHQAVGIVVLTLAV). Residue His-324 coordinates heme.

The protein belongs to the COX15/CtaA family. Type 2 subfamily. In terms of assembly, interacts with CtaB. It depends on heme b as a cofactor.

The protein resides in the cell membrane. The enzyme catalyses Fe(II)-heme o + 2 A + H2O = Fe(II)-heme a + 2 AH2. Its pathway is porphyrin-containing compound metabolism; heme A biosynthesis; heme A from heme O: step 1/1. Its function is as follows. Catalyzes the conversion of heme O to heme A by two successive hydroxylations of the methyl group at C8. The first hydroxylation forms heme I, the second hydroxylation results in an unstable dihydroxymethyl group, which spontaneously dehydrates, resulting in the formyl group of heme A. In Rhodopseudomonas palustris (strain BisB5), this protein is Heme A synthase.